Here is a 382-residue protein sequence, read N- to C-terminus: PPE family protein PPE44 (382 aa).

Belongs to the mycobacterial PPE family.

It is found in the secreted. The protein localises to the cell wall. Its subcellular location is the cell surface. Its function is as follows. Virulence factor that modulates host innate immune response. The protein is PPE family protein PPE44 of Mycobacterium tuberculosis (strain CDC 1551 / Oshkosh).